Consider the following 614-residue polypeptide: MLVALVVLFLSVFMAMKFLYKRIFVASRLKMIEKPSEDWEPASREAMIERLRSEVFDLVVVGGGSTGAGCALDGATRGLKVALVDAGDFGSGTSSKSTKLVHGGVRYLAKAVSNLDWSQYKLVWQALGERTTMFEISPYLTNSIKIMVPIYSKILIPYYYVGLKLYDWISGFKSLGKSYFIDRKEAVDAFPHINKKNLCGAMVYFDGQQDDARNNVMIVMTAVCHGAVAANHVSARSLMIEGGKIVGVRCRDEITGSEIEIRGTGVINSTGNLADDLRRMDDADAREIIVQSSGTHIVIPKEYAPKEMGFLDPLTSDNRIAFFMPWMGKTIVGSTDIKTKTELSPSPTEEDLEFLIHEVQAYTSMHPKLTRDEVSAVWTGIRPLVKDPDVSDTGSIVRKHFVRIEKNGLLTVTGGKWTIYRKMAEDAIDLAISAFSLKPSGPCVTKYVRILGGDGYTKNTWASIQKELGVPKNVAERLARSYGTRALRLSSYIKKNRKKVLSVKYSYLIEEVEYCIDNEMAVKVCDVLCNRLMIGLMDVKEAYQCIDKVLGVFKKKHGWDADRCNREEADAIRMLDKYGLQILRGCGQDASSLQMECPEEKRHRGERRLPPQEK.

Residue 57 to 85 participates in FAD binding; sequence DLVVVGGGSTGAGCALDGATRGLKVALVD. A disordered region spans residues 595–614; it reads MECPEEKRHRGERRLPPQEK. The segment covering 598–614 has biased composition (basic and acidic residues); sequence PEEKRHRGERRLPPQEK.

The protein belongs to the FAD-dependent glycerol-3-phosphate dehydrogenase family. Requires FAD as cofactor.

The protein localises to the cytoplasm. It carries out the reaction a quinone + sn-glycerol 3-phosphate = dihydroxyacetone phosphate + a quinol. Its pathway is polyol metabolism; glycerol degradation via glycerol kinase pathway; glycerone phosphate from sn-glycerol 3-phosphate (anaerobic route): step 1/1. This Encephalitozoon cuniculi (strain GB-M1) (Microsporidian parasite) protein is Probable glycerol-3-phosphate dehydrogenase.